Reading from the N-terminus, the 235-residue chain is Small ribosomal subunit protein uS2c (235 aa).

It belongs to the universal ribosomal protein uS2 family.

It localises to the plastid. Its subcellular location is the chloroplast. This chain is Small ribosomal subunit protein uS2c (rps2), found in Adiantum capillus-veneris (Maidenhair fern).